A 316-amino-acid chain; its full sequence is Annexin D7 (316 aa).

Ala-2 carries the N-acetylalanine modification. 4 Annexin repeats span residues 11–82 (PLPE…LWTF), 83–154 (EPAE…PLVS), 166–237 (TLAR…AVIK), and 241–312 (YPEK…ALLG). Residues Phe-24, Gly-26, Gly-28, and Glu-68 each coordinate Ca(2+). Residue Ser-95 is modified to Phosphoserine. Phosphothreonine occurs at positions 100 and 112. Tyr-129 is modified (phosphotyrosine). Ca(2+) contacts are provided by Ile-254 and Gly-258. At Tyr-283 the chain carries Phosphotyrosine. Ser-288 bears the Phosphoserine mark. Ca(2+) contacts are provided by Asp-298, Thr-299, and Glu-304.

It belongs to the annexin (TC 1.A.31.1) family. As to expression, expressed in flowers.

The sequence is that of Annexin D7 (ANNAT7) from Arabidopsis thaliana (Mouse-ear cress).